A 506-amino-acid chain; its full sequence is Histidine ammonia-lyase (506 aa).

Positions 142 to 144 form a cross-link, 5-imidazolinone (Ala-Gly); sequence ASG. A 2,3-didehydroalanine (Ser) modification is found at serine 143.

This sequence belongs to the PAL/histidase family. Post-translationally, contains an active site 4-methylidene-imidazol-5-one (MIO), which is formed autocatalytically by cyclization and dehydration of residues Ala-Ser-Gly.

It is found in the cytoplasm. The enzyme catalyses L-histidine = trans-urocanate + NH4(+). It functions in the pathway amino-acid degradation; L-histidine degradation into L-glutamate; N-formimidoyl-L-glutamate from L-histidine: step 1/3. The sequence is that of Histidine ammonia-lyase from Bacillus cereus (strain B4264).